The chain runs to 601 residues: Uptake hydrogenase large subunit (601 aa).

Ni(2+) is bound by residues Cys74, Cys77, Cys580, and Cys583.

It belongs to the [NiFe]/[NiFeSe] hydrogenase large subunit family. Heterodimer of a large and a small subunit. Requires Ni(2+) as cofactor.

Its subcellular location is the cell membrane. It catalyses the reaction H2 + A = AH2. In terms of biological role, this enzyme recycles the H(2) produced by nitrogenase to increase the production of ATP and to protect nitrogenase against inhibition or damage by O(2) under carbon- or phosphate-limited conditions. The sequence is that of Uptake hydrogenase large subunit (hupL) from Azotobacter chroococcum mcd 1.